Reading from the N-terminus, the 300-residue chain is L-arabinolactonase (300 aa).

The a divalent metal cation site is built by Glu22, Asn156, and Asp205.

It belongs to the SMP-30/CGR1 family. A divalent metal cation is required as a cofactor.

The catalysed reaction is L-arabinono-1,4-lactone + H2O = L-arabinonate + H(+). Catalyzes the cleavage of L-arabino-gamma-lactone to L-arabonate. Is involved in a degradation pathway of L-arabinose that allows A.brasilense to grow on L-arabinose as a sole carbon source. Can also use D-galactono-1,4-lactone as substrate in vitro; however, the enzyme is probably not involved in the metabolism of D-galactose in vivo. This chain is L-arabinolactonase (araB), found in Azospirillum brasilense.